The sequence spans 608 residues: Probable Ufm1-specific protease 2 (608 aa).

Residues cysteine 441, aspartate 565, and histidine 567 contribute to the active site.

The protein belongs to the peptidase C78 family.

In terms of biological role, thiol protease which recognizes and hydrolyzes the peptide bond at the C-terminal Gly of UFM1, a ubiquitin-like modifier protein bound to a number of target proteins. Does not hydrolyze SUMO1 or ISG15 ubiquitin-like proteins. The chain is Probable Ufm1-specific protease 2 from Drosophila pseudoobscura pseudoobscura (Fruit fly).